Consider the following 701-residue polypeptide: Polyribonucleotide nucleotidyltransferase (701 aa).

Mg(2+) is bound by residues aspartate 483 and aspartate 489. The region spanning 550 to 609 (PRIYTLHIPTDKIRDVIGPGGKVIRGIIEQTGVKIDVEDDGTIHVASADEASANKAIQII) is the KH domain. The 68-residue stretch at 619–686 (GKTYLGKVVR…EGNKIKLSRK (68 aa)) folds into the S1 motif domain.

Belongs to the polyribonucleotide nucleotidyltransferase family. The cofactor is Mg(2+).

The protein resides in the cytoplasm. The enzyme catalyses RNA(n+1) + phosphate = RNA(n) + a ribonucleoside 5'-diphosphate. In terms of biological role, involved in mRNA degradation. Catalyzes the phosphorolysis of single-stranded polyribonucleotides processively in the 3'- to 5'-direction. In Solibacter usitatus (strain Ellin6076), this protein is Polyribonucleotide nucleotidyltransferase.